The following is a 70-amino-acid chain: Dermaseptin-PH (70 aa).

Positions Met1–Cys22 are cleaved as a signal peptide. Residues Glu23–Arg44 constitute a propeptide that is removed on maturation. Gln67 carries the post-translational modification Glutamine amide. The propeptide occupies Gly68–Gln70.

This sequence belongs to the frog skin active peptide (FSAP) family. In terms of tissue distribution, expressed by the skin glands.

The protein resides in the secreted. The protein localises to the target cell membrane. Functionally, antimicrobial peptide which inhibits the growth of Gram-negative (MIC=16-64 uM) and Gram-positive bacteria (MIC=32 uM), and pathogenic yeast Candida albicans (MIC=16 uM). Shows a broad-spectrum of anticancer activities against several cancer cell lines. Also shows slight cytotoxicity on human dermal microvascular endothelium cells (IC(50)=4.85 uM). Induces low hemolysis against horse erythrocytes. This chain is Dermaseptin-PH, found in Pithecopus hypochondrialis (Orange-legged leaf frog).